Here is a 347-residue protein sequence, read N- to C-terminus: Suppressor of RNA-mediated gene silencing (347 aa).

It belongs to the phytoreovirus non-structural protein 10 family.

Its function is as follows. Suppressor of RNA-mediated gene silencing, also known as post-transcriptional gene silencing (PTGS), a mechanism of plant viral defense that limits the accumulation of viral RNAs. The chain is Suppressor of RNA-mediated gene silencing from Catharanthus roseus (Madagascar periwinkle).